We begin with the raw amino-acid sequence, 68 residues long: UPF0434 protein BTH_I0741 (68 aa).

Belongs to the UPF0434 family.

The sequence is that of UPF0434 protein BTH_I0741 from Burkholderia thailandensis (strain ATCC 700388 / DSM 13276 / CCUG 48851 / CIP 106301 / E264).